Reading from the N-terminus, the 509-residue chain is ATP synthase subunit alpha (509 aa).

169-176 (GDRQTGKT) serves as a coordination point for ATP.

The protein belongs to the ATPase alpha/beta chains family. In terms of assembly, F-type ATPases have 2 components, CF(1) - the catalytic core - and CF(0) - the membrane proton channel. CF(1) has five subunits: alpha(3), beta(3), gamma(1), delta(1), epsilon(1). CF(0) has three main subunits: a(1), b(2) and c(9-12). The alpha and beta chains form an alternating ring which encloses part of the gamma chain. CF(1) is attached to CF(0) by a central stalk formed by the gamma and epsilon chains, while a peripheral stalk is formed by the delta and b chains.

It localises to the cell inner membrane. It carries out the reaction ATP + H2O + 4 H(+)(in) = ADP + phosphate + 5 H(+)(out). Its function is as follows. Produces ATP from ADP in the presence of a proton gradient across the membrane. The alpha chain is a regulatory subunit. The protein is ATP synthase subunit alpha of Rhizobium meliloti (strain 1021) (Ensifer meliloti).